Here is a 361-residue protein sequence, read N- to C-terminus: Lactate-binding periplasmic protein TTHA0766 (361 aa).

A signal peptide (tat-type signal) is located at residues Met1–Ala22. 3 residues coordinate substrate: Tyr101, Asn158, and Arg178. Position 158 (Asn158) interacts with Ca(2+). Positions 216, 217, and 247 each coordinate Ca(2+). Substrate contacts are provided by residues Phe217 and Gln247–Asp250.

The protein belongs to the bacterial solute-binding protein 7 family. As to quaternary structure, homodimer. The complex comprises the extracytoplasmic solute receptor protein TTHA0766, and the two putative transmembrane proteins TTHA0767 and TTHA0768.

It is found in the periplasm. In terms of biological role, part of the tripartite ATP-independent periplasmic (TRAP) transport system involved in the uptake of lactate. This protein specifically binds L-lactate. In Thermus thermophilus (strain ATCC 27634 / DSM 579 / HB8), this protein is Lactate-binding periplasmic protein TTHA0766.